We begin with the raw amino-acid sequence, 165 residues long: Endoribonuclease YbeY (165 aa).

The Zn(2+) site is built by His-131, His-135, and His-141.

It belongs to the endoribonuclease YbeY family. Zn(2+) is required as a cofactor.

The protein localises to the cytoplasm. Functionally, single strand-specific metallo-endoribonuclease involved in late-stage 70S ribosome quality control and in maturation of the 3' terminus of the 16S rRNA. The polypeptide is Endoribonuclease YbeY (Lachnoclostridium phytofermentans (strain ATCC 700394 / DSM 18823 / ISDg) (Clostridium phytofermentans)).